We begin with the raw amino-acid sequence, 1531 residues long: DNA topoisomerase 2-alpha (1531 aa).

An N-acetylmethionine modification is found at Met1. Phosphoserine is present on Ser4. Lys17 is covalently cross-linked (Glycyl lysine isopeptide (Lys-Gly) (interchain with G-Cter in SUMO2)). ATP-binding positions include Asn91, Asn120, and 148-150 (SSN). Glycyl lysine isopeptide (Lys-Gly) (interchain with G-Cter in SUMO2) cross-links involve residues Lys156 and Lys157. Residue 161–168 (GRNGYGAK) participates in ATP binding. Lys261 participates in a covalent cross-link: Glycyl lysine isopeptide (Lys-Gly) (interchain with G-Cter in SUMO2). Position 282 is a phosphothreonine (Thr282). The segment at 342–344 (KKK) is interaction with DNA. Residue Lys352 forms a Glycyl lysine isopeptide (Lys-Gly) (interchain with G-Cter in SUMO2) linkage. 376-378 (QTK) provides a ligand contact to ATP. Glycyl lysine isopeptide (Lys-Gly) (interchain with G-Cter in SUMO2) cross-links involve residues Lys386, Lys397, Lys416, Lys418, Lys425, and Lys440. The Toprim domain maps to 455–572 (CTLILTEGDS…SLLRHRFLEE (118 aa)). Glu461 serves as a coordination point for Mg(2+). Glycyl lysine isopeptide (Lys-Gly) (interchain with G-Cter in SUMO2) cross-links involve residues Lys466, Lys480, and Lys529. Mg(2+) is bound by residues Asp541 and Asp543. Residues Lys584, Lys599, Lys614, Lys622, Lys625, Lys632, Lys639, Lys655, Lys662, and Lys676 each participate in a glycyl lysine isopeptide (Lys-Gly) (interchain with G-Cter in SUMO2) cross-link. The 457-residue stretch at 715–1171 (IPSMVDGLKP…SPSDLWKEDL (457 aa)) folds into the Topo IIA-type catalytic domain. Tyr805 acts as the O-(5'-phospho-DNA)-tyrosine intermediate in catalysis. The segment at 990–999 (KLQTSLTCNS) is interaction with DNA. Residues 1018 to 1028 (ILRDFFELRLK) carry the Nuclear export signal motif. A Glycyl lysine isopeptide (Lys-Gly) (interchain with G-Cter in SUMO2) cross-link involves residue Lys1075. Disordered regions lie at residues 1090 to 1123 (WKEA…DSGP) and 1184 to 1531 (KEKQ…DDLF). Over residues 1099 to 1108 (DEEENEESDN) the composition is skewed to acidic residues. Ser1106 is modified (phosphoserine; by CK1). Residues Lys1114, Lys1196, and Lys1204 each participate in a glycyl lysine isopeptide (Lys-Gly) (interchain with G-Cter in SUMO2) cross-link. Thr1205 is modified (phosphothreonine). A Phosphoserine modification is found at Ser1213. Lys1228 participates in a covalent cross-link: Glycyl lysine isopeptide (Lys-Gly) (interchain with G-Cter in SUMO2). Lys1240 participates in a covalent cross-link: Glycyl lysine isopeptide (Lys-Gly) (interchain with G-Cter in SUMO1); alternate. Lys1240 participates in a covalent cross-link: Glycyl lysine isopeptide (Lys-Gly) (interchain with G-Cter in SUMO2); alternate. At Thr1244 the chain carries Phosphothreonine. Ser1247 is modified (phosphoserine). Positions 1256 to 1272 (EGLKQRLEKKQKREPGT) are enriched in basic and acidic residues. Residues Lys1259, Lys1276, Lys1283, and Lys1286 each participate in a glycyl lysine isopeptide (Lys-Gly) (interchain with G-Cter in SUMO2) cross-link. Residues Ser1295, Ser1297, Ser1299, and Ser1302 each carry the phosphoserine modification. At Thr1327 the chain carries Phosphothreonine. Residues 1330 to 1349 (LDSDEDFSDFDEKTDDEDFV) are compositionally biased toward acidic residues. Phosphoserine is present on residues Ser1332 and Ser1337. Position 1343 is a phosphothreonine; by PLK3 (Thr1343). Ser1351 and Ser1354 each carry phosphoserine. Residues Lys1363, Lys1367, and Lys1373 each participate in a glycyl lysine isopeptide (Lys-Gly) (interchain with G-Cter in SUMO2) cross-link. Phosphoserine is present on residues Ser1374 and Ser1377. Lys1385 participates in a covalent cross-link: Glycyl lysine isopeptide (Lys-Gly) (interchain with G-Cter in SUMO2). 4 positions are modified to phosphoserine: Ser1387, Ser1391, Ser1392, and Ser1393. Over residues 1406-1431 (TNPVPKKNVTVKKTAAKSQSSTSTTG) the composition is skewed to low complexity. Lys1422 is covalently cross-linked (Glycyl lysine isopeptide (Lys-Gly) (interchain with G-Cter in SUMO2); alternate). Lys1422 is modified (N6-acetyllysine; alternate). The interaction with PLSCR1 stretch occupies residues 1433-1439 (KKRAAPK). Residue Lys1442 forms a Glycyl lysine isopeptide (Lys-Gly) (interchain with G-Cter in SUMO2); alternate linkage. Lys1442 carries the N6-acetyllysine; alternate modification. Position 1449 is a phosphoserine (Ser1449). Residues Lys1454 and Lys1459 each participate in a glycyl lysine isopeptide (Lys-Gly) (interchain with G-Cter in SUMO2) cross-link. The residue at position 1469 (Ser1469) is a Phosphoserine; by CK2. The residue at position 1470 (Thr1470) is a Phosphothreonine. A phosphoserine mark is found at Ser1471, Ser1474, and Ser1476. Glycyl lysine isopeptide (Lys-Gly) (interchain with G-Cter in SUMO2) cross-links involve residues Lys1484 and Lys1492. Residues 1491–1502 (SKGESDDFHMDF) are compositionally biased toward basic and acidic residues. Ser1495, Ser1504, and Ser1525 each carry phosphoserine.

This sequence belongs to the type II topoisomerase family. In terms of assembly, homodimer. Interacts with COPS5. Interacts with RECQL5; this stimulates DNA decatenation. Interacts with SETMAR; stimulates the topoisomerase activity. Interacts with DHX9; this interaction occurs in a E2 enzyme UBE2I- and RNA-dependent manner, negatively regulates DHX9-mediated double-stranded DNA and RNA duplex helicase activity and stimulates TOP2A-mediated supercoiled DNA relaxation activity. Interacts with HNRNPU (via C-terminus); this interaction protects the topoisomerase TOP2A from degradation and positively regulates the relaxation of supercoiled DNA in a RNA-dependent manner. Interacts with MCM3AP isoform GANP. Interacts with ERCC6. Interacts with PLSCR1. Interacts with GCNA; this interaction allows the resolution of topoisomerase II (TOP2A) DNA-protein cross-links. Interacts with POL1RA/RPA1 (via dock II) and UBTF in the context of Pol I complex; may assist Pol I transcription initiation by releasing supercoils occurring during DNA unwinding. Interacts with TPRN; TPRN interacts with a number of DNA damage response proteins, is recruited to sites of DNA damage and may play a role in DNA damage repair. The cofactor is Mg(2+). Requires Mn(2+) as cofactor. It depends on Ca(2+) as a cofactor. Post-translationally, phosphorylation has no effect on catalytic activity. However, phosphorylation at Ser-1106 by CSNK1D/CK1 promotes DNA cleavable complex formation. In terms of processing, (Microbial infection) Deubiquitinated by Epstein-Barr virus BPLF1; leading to stabilized SUMOylated TOP2A trapped in cleavage complexes, which halts the DNA damage response to TOP2A-induced double-strand DNA breaks. SUMOylated. As to expression, expressed in the tonsil, spleen, lymph node, thymus, skin, pancreas, testis, colon, kidney, liver, brain and lung. Also found in high-grade lymphomas, squamous cell lung tumors and seminomas.

Its subcellular location is the cytoplasm. The protein resides in the nucleus. It localises to the nucleoplasm. The protein localises to the nucleolus. The catalysed reaction is ATP-dependent breakage, passage and rejoining of double-stranded DNA.. With respect to regulation, specifically inhibited by the intercalating agent amsacrine. In terms of biological role, key decatenating enzyme that alters DNA topology by binding to two double-stranded DNA molecules, generating a double-stranded break in one of the strands, passing the intact strand through the broken strand, and religating the broken strand. May play a role in regulating the period length of BMAL1 transcriptional oscillation. This chain is DNA topoisomerase 2-alpha (TOP2A), found in Homo sapiens (Human).